The primary structure comprises 225 residues: 7-cyano-7-deazaguanine synthase (225 aa).

9-19 (LSGGLDSATCL) lines the ATP pocket. Residues cysteine 189, cysteine 199, cysteine 202, and cysteine 205 each contribute to the Zn(2+) site.

It belongs to the QueC family. Requires Zn(2+) as cofactor.

The enzyme catalyses 7-carboxy-7-deazaguanine + NH4(+) + ATP = 7-cyano-7-deazaguanine + ADP + phosphate + H2O + H(+). The protein operates within purine metabolism; 7-cyano-7-deazaguanine biosynthesis. In terms of biological role, catalyzes the ATP-dependent conversion of 7-carboxy-7-deazaguanine (CDG) to 7-cyano-7-deazaguanine (preQ(0)). The sequence is that of 7-cyano-7-deazaguanine synthase from Dechloromonas aromatica (strain RCB).